The primary structure comprises 419 residues: Subtilisin-like protease 2 (419 aa).

The first 16 residues, 1-16 (MQLLNFGLLLLPFVAG), serve as a signal peptide directing secretion. A propeptide spanning residues 17–122 (DLAPQPEPLL…VHPDQHVYLA (106 aa)) is cleaved from the precursor. The Inhibitor I9 domain occupies 36-122 (QYIVTLKEGL…VHPDQHVYLA (87 aa)). In terms of domain architecture, Peptidase S8 spans 131 to 419 (RWGLGYMSSK…IQERKFKLPK (289 aa)). Catalysis depends on charge relay system residues Asp-169 and His-201. N-linked (GlcNAc...) asparagine glycans are attached at residues Asn-248, Asn-261, and Asn-348. Residue Ser-357 is the Charge relay system of the active site. An N-linked (GlcNAc...) asparagine glycan is attached at Asn-388.

Belongs to the peptidase S8 family.

It localises to the secreted. In terms of biological role, secreted subtilisin-like serine protease with keratinolytic activity that contributes to pathogenicity. This Trichophyton verrucosum (Cattle ringworm fungus) protein is Subtilisin-like protease 2 (SUB2).